Here is a 78-residue protein sequence, read N- to C-terminus: MLKLRLKRTGRKRSPSYRLVVMENTARRDGRPIEELGYYSPITKQYKFDVEKIKKWLDFGVKPTETVSSLLRKAEIIS.

It belongs to the bacterial ribosomal protein bS16 family.

It localises to the plastid. The protein localises to the chloroplast. The chain is Small ribosomal subunit protein bS16c from Phaeodactylum tricornutum (strain CCAP 1055/1).